Reading from the N-terminus, the 408-residue chain is Acetate kinase (408 aa).

Residue asparagine 10 coordinates Mg(2+). ATP is bound at residue lysine 17. Arginine 96 is a substrate binding site. Aspartate 153 acts as the Proton donor/acceptor in catalysis. Residues 213 to 217 (HLGNG) and 288 to 290 (DLR) contribute to the ATP site. Glutamate 393 provides a ligand contact to Mg(2+).

It belongs to the acetokinase family. Homodimer. Mg(2+) is required as a cofactor. The cofactor is Mn(2+).

Its subcellular location is the cytoplasm. The catalysed reaction is acetate + ATP = acetyl phosphate + ADP. Its pathway is metabolic intermediate biosynthesis; acetyl-CoA biosynthesis; acetyl-CoA from acetate: step 1/2. Functionally, catalyzes the formation of acetyl phosphate from acetate and ATP. Can also catalyze the reverse reaction. In Borrelia recurrentis (strain A1), this protein is Acetate kinase.